The primary structure comprises 353 residues: Heterogeneous nuclear ribonucleoproteins A2/B1 (353 aa).

Methionine 1 carries the post-translational modification N-acetylmethionine. At threonine 4 the chain carries Phosphothreonine. Leucine 5 is covalently cross-linked (Glycyl lysine isopeptide (Lys-Gly) (interchain with G-Cter in SUMO2)). Residues 9 to 15 (PLERKKR) carry the Nuclear localization signal motif. RRM domains are found at residues 21 to 104 (RKLF…ESGK) and 112 to 191 (KKLF…LSRQ). Lysine 22 participates in a covalent cross-link: Glycyl lysine isopeptide (Lys-Gly) (interchain with G-Cter in SUMO2). Serine 29 is modified (phosphoserine). Position 38 is an omega-N-methylarginine (arginine 38). At serine 85 the chain carries Phosphoserine. Lysine 104 bears the N6,N6-dimethyllysine; alternate mark. Residue lysine 104 forms a Glycyl lysine isopeptide (Lys-Gly) (interchain with G-Cter in SUMO2); alternate linkage. Glycyl lysine isopeptide (Lys-Gly) (interchain with G-Cter in SUMO2) cross-links involve residues lysine 112, lysine 120, and lysine 137. At threonine 140 the chain carries Phosphothreonine. Serine 149 is subject to Phosphoserine. Lysine 152 is covalently cross-linked (Glycyl lysine isopeptide (Lys-Gly) (interchain with G-Cter in SUMO2)). Threonine 159 is subject to Phosphothreonine. Residues lysine 168 and lysine 173 each participate in a glycyl lysine isopeptide (Lys-Gly) (interchain with G-Cter in SUMO2); alternate cross-link. 2 positions are modified to N6-acetyllysine; alternate: lysine 168 and lysine 173. Threonine 176 bears the Phosphothreonine mark. Lysine 186 is covalently cross-linked (Glycyl lysine isopeptide (Lys-Gly) (interchain with G-Cter in SUMO2)). Phosphoserine occurs at positions 189 and 201. Positions 193–353 (MQEVQSSRSG…SGGYGGRSRY (161 aa)) are disordered. Over residues 202–223 (GRGGNFGFGDSRGGGGNFGPGP) the composition is skewed to gly residues. Arginine 203 is modified (asymmetric dimethylarginine; alternate). The residue at position 203 (arginine 203) is a Dimethylated arginine; alternate. Arginine 203 carries the omega-N-methylarginine; alternate modification. Phosphoserine is present on serine 212. Asymmetric dimethylarginine; alternate is present on arginine 213. Arginine 213 is subject to Dimethylated arginine; alternate. An Omega-N-methylarginine; alternate modification is found at arginine 213. At serine 225 the chain carries Phosphoserine. The residue at position 228 (arginine 228) is an Omega-N-methylarginine. Serine 231 and serine 236 each carry phosphoserine. Arginine 238 is modified (omega-N-methylarginine). The residue at position 259 (serine 259) is a Phosphoserine. Arginine 266 is subject to Asymmetric dimethylarginine; alternate. Position 266 is an omega-N-methylarginine; alternate (arginine 266). The nuclear targeting sequence stretch occupies residues 308 to 347 (QQPSNYGPMKSGNFGGSRNMGGPYGGGNYGPGGSGGSGGY). Residues 320-353 (NFGGSRNMGGPYGGGNYGPGGSGGSGGYGGRSRY) are compositionally biased toward gly residues. Phosphoserine is present on serine 324. Residue arginine 325 is modified to Omega-N-methylarginine. Tyrosine 331 carries the phosphotyrosine modification. Phosphoserine is present on residues serine 341 and serine 344. Tyrosine 347 carries the post-translational modification Phosphotyrosine. Arginine 350 is modified (omega-N-methylarginine).

In terms of assembly, homodimer; dimerization is required for nucleocytoplasmic translocation. Identified in the spliceosome C complex. Identified in a IGF2BP1-dependent mRNP granule complex containing untranslated mRNAs. Interacts with IGF2BP1. Interacts with C9orf72. Interacts with DGCR8. Interacts with TARDBP. Interacts with CKAP5. Interacts with TBK1. Interacts with STING1. Interacts with SRC. Interacts with PPIA/CYPA. Interacts (via C-terminus) with FAM76B; the interaction results in retention of HNRNPA2B1 in the nucleus and inhibition of the NF-kappa-B-mediated inflammatory pathway. Interacts with NF-kappa-B inhibitors NFKBIA and NFKBIE; the interaction may be mediated by the RRM2 domain of HNRNPA2B1, and HNRNPA2B1 may interact simultaneously with FAM76B and either NFKBIA or NFKBIE to form a complex. Post-translationally, sumoylated in exosomes, promoting miRNAs-binding. In terms of processing, asymmetric dimethylation at Arg-266 constitutes the major methylation site. According to a report, methylation affects subcellular location and promotes nuclear localization. According to another report, methylation at Arg-266 does not influence nucleocytoplasmic shuttling.

Its subcellular location is the nucleus. The protein localises to the nucleoplasm. It localises to the cytoplasm. It is found in the cytoplasmic granule. The protein resides in the secreted. Its subcellular location is the extracellular exosome. Heterogeneous nuclear ribonucleoprotein (hnRNP) that associates with nascent pre-mRNAs, packaging them into hnRNP particles. The hnRNP particle arrangement on nascent hnRNA is non-random and sequence-dependent and serves to condense and stabilize the transcripts and minimize tangling and knotting. Packaging plays a role in various processes such as transcription, pre-mRNA processing, RNA nuclear export, subcellular location, mRNA translation and stability of mature mRNAs. Forms hnRNP particles with at least 20 other different hnRNP and heterogeneous nuclear RNA in the nucleus. Involved in transport of specific mRNAs to the cytoplasm in oligodendrocytes and neurons: acts by specifically recognizing and binding the A2RE (21 nucleotide hnRNP A2 response element) or the A2RE11 (derivative 11 nucleotide oligonucleotide) sequence motifs present on some mRNAs, and promotes their transport to the cytoplasm. Specifically binds single-stranded telomeric DNA sequences, protecting telomeric DNA repeat against endonuclease digestion. Also binds other RNA molecules, such as primary miRNA (pri-miRNAs): acts as a nuclear 'reader' of the N6-methyladenosine (m6A) mark by specifically recognizing and binding a subset of nuclear m6A-containing pri-miRNAs. Binding to m6A-containing pri-miRNAs promotes pri-miRNA processing by enhancing binding of DGCR8 to pri-miRNA transcripts. Involved in miRNA sorting into exosomes following sumoylation, possibly by binding (m6A)-containing pre-miRNAs. Acts as a regulator of efficiency of mRNA splicing, possibly by binding to m6A-containing pre-mRNAs. Plays a role in the splicing of pyruvate kinase PKM by binding repressively to sequences flanking PKM exon 9, inhibiting exon 9 inclusion and resulting in exon 10 inclusion and production of the PKM M2 isoform. Also plays a role in the activation of the innate immune response. Mechanistically, senses the presence of viral DNA in the nucleus, homodimerizes and is demethylated by JMJD6. In turn, translocates to the cytoplasm where it activates the TBK1-IRF3 pathway, leading to interferon alpha/beta production. Its function is as follows. (Microbial infection) Involved in the transport of HIV-1 genomic RNA out of the nucleus, to the microtubule organizing center (MTOC), and then from the MTOC to the cytoplasm: acts by specifically recognizing and binding the A2RE (21 nucleotide hnRNP A2 response element) sequence motifs present on HIV-1 genomic RNA, and promotes its transport. This Homo sapiens (Human) protein is Heterogeneous nuclear ribonucleoproteins A2/B1 (HNRNPA2B1).